Consider the following 176-residue polypeptide: Inorganic pyrophosphatase (176 aa).

Substrate contacts are provided by Lys30, Arg44, and Tyr56. Asp66, Asp71, and Asp103 together coordinate Mg(2+). Tyr140 contributes to the substrate binding site.

This sequence belongs to the PPase family. Homohexamer. It depends on Mg(2+) as a cofactor.

It localises to the cytoplasm. The enzyme catalyses diphosphate + H2O = 2 phosphate + H(+). In terms of biological role, catalyzes the hydrolysis of inorganic pyrophosphate (PPi) forming two phosphate ions. The polypeptide is Inorganic pyrophosphatase (Methanothermobacter thermautotrophicus (strain ATCC 29096 / DSM 1053 / JCM 10044 / NBRC 100330 / Delta H) (Methanobacterium thermoautotrophicum)).